The chain runs to 447 residues: Cysteine--tRNA ligase (447 aa).

Cys-28 is a Zn(2+) binding site. The 'HIGH' region signature appears at 30 to 40 (PTVYNYIHVGN). Zn(2+)-binding residues include Cys-211, His-236, and Glu-240. Residues 268-272 (KMSKS) carry the 'KMSKS' region motif. Lys-271 lines the ATP pocket.

It belongs to the class-I aminoacyl-tRNA synthetase family. Monomer. The cofactor is Zn(2+).

It localises to the cytoplasm. It catalyses the reaction tRNA(Cys) + L-cysteine + ATP = L-cysteinyl-tRNA(Cys) + AMP + diphosphate. The protein is Cysteine--tRNA ligase of Streptococcus pneumoniae serotype 4 (strain ATCC BAA-334 / TIGR4).